The following is a 138-amino-acid chain: Basic phospholipase A2 ammodytoxin A (138 aa).

Positions 1-16 are cleaved as a signal peptide; the sequence is MRTLWIVAVCLIGVEG. 7 cysteine pairs are disulfide-bonded: cysteine 42–cysteine 131, cysteine 44–cysteine 60, cysteine 59–cysteine 111, cysteine 65–cysteine 138, cysteine 66–cysteine 104, cysteine 73–cysteine 97, and cysteine 91–cysteine 102. Ca(2+) is bound by residues tyrosine 43, glycine 45, and glycine 47. The active site involves histidine 63. Aspartate 64 lines the Ca(2+) pocket. Residue aspartate 105 is part of the active site.

Belongs to the phospholipase A2 family. Group II subfamily. D49 sub-subfamily. Monomer. Binds to calmodulin, coagulation factor X (F10), M-type PLA2 receptor (R-180). May also bind to 14-3-3 proteins gamma (YWHAG) and epsilon (YWHAE), and R25, a mitochondrial membrane protein. Ca(2+) is required as a cofactor. In terms of tissue distribution, expressed by the venom gland.

It is found in the secreted. Its subcellular location is the host cytoplasm. It localises to the host cytosol. The enzyme catalyses a 1,2-diacyl-sn-glycero-3-phosphocholine + H2O = a 1-acyl-sn-glycero-3-phosphocholine + a fatty acid + H(+). Functionally, snake venom phospholipase A2 (PLA2) that acts as a presynaptic neurotoxin, an inhibitor of blood coagulation, and has been found to bind with high affinity to intracellular proteins. The response of indirectly stimulated neuromuscular preparations to ammodytoxin (Atx) is triphasic. The first phase, the transient inhibition of the acetylcholine (ACh) release, starts soon after the addition of Atx and lasts for several minutes. This phase is probably independent of Atx enzymatic activity. The effect may be due to the specific binding of the toxin to presynaptic receptors. These receptors, called N-type receptors, are still unidentified. It is noteworthy that a neuronal isoform of the M-type PLA2 receptor (R180) has been identified as a high-affinity receptor for Atx in neuronal plasma membranes. It was demonstrated however that this receptor is not essential for expression of neurotoxicity by Atx. The second phase corresponds to an augmentation of neurotransmitter release. A peak is reached 10-20 minutes after exposure of the preparation to Atx and is followed by a gradual reduction. In this phase, the enzymatic activity of Atx of the mammalian is not significant. It is speculated that the increased release of neurotransmitter in this phase is induced by the interference of Atx with voltage-gated potassium channels. Measurements of ionic currents showed however that voltage-gated potassium channels are not affected by Atx. The third phase of the response of neuromuscular preparations to Atx, which corresponds to a complete and irreversible paralysis, is clearly dependent on the hydrolytic activity of the toxin. In addition to its presynaptic neurotoxicity, Atx shows an anticoagulant activity by binding with high affinity to activated coagulation factor X (F10) thus inhibiting the formation of the prothrombinase complex (FX/FV) and its activity (IC(50) is 20 nM). Surprisingly, Atx was discovered to bind intracellular proteins such as calmodulin (CaM) (IC(50) is 6 nM), 14-3-3 proteins gamma (YWHAG) and epsilon (YWHAE) (by similarity with AtxC), as well as R25 (by similarity with AtxC), a mitochondrial integral membrane protein found in cerebral cortex. These findings raised a doubt about the dogma of the exclusively extracellular action of PLA2s, defended by the potential instability of these molecules in the reducing environment of the eukaryotic cytosol coupled with their possible inability to act as enzymes in this cellular compartment, due to too low concentration of calcium ions. This hypothesis was challenged efficiently by demonstrating the internalization of AtxA into a culture cells, but still remains to be directly demonstrated in vivo. PLA2 catalyzes the calcium-dependent hydrolysis of the 2-acyl groups in 3-sn-phosphoglycerides. The polypeptide is Basic phospholipase A2 ammodytoxin A (Vipera ammodytes ammodytes (Western sand viper)).